The chain runs to 413 residues: Isobutyryl-CoA dehydrogenase, mitochondrial (413 aa).

The transit peptide at 1 to 20 (MAMLRSGYRRFGCLRAALKS) directs the protein to the mitochondrion. Lysine 48 bears the N6-acetyllysine; alternate mark. Lysine 48 bears the N6-succinyllysine; alternate mark. FAD-binding positions include 156-165 (YCLTEPGSGS) and 189-191 (FIS). Position 165 (serine 165) interacts with substrate. Lysine 211 carries the post-translational modification N6-succinyllysine. An N6-acetyllysine modification is found at lysine 229. Lysine 269 is modified (N6-succinyllysine). 272-275 (NGGR) provides a ligand contact to substrate. Residues arginine 300, 310–311 (SQ), and 369–373 (QMHGG) each bind FAD. The Proton acceptor role is filled by glutamate 396. Residue 398–400 (SNE) participates in FAD binding. Residue arginine 408 participates in substrate binding.

Belongs to the acyl-CoA dehydrogenase family. In terms of assembly, homotetramer, formed by a dimer of dimers. It depends on FAD as a cofactor.

Its subcellular location is the mitochondrion. The catalysed reaction is 2-methylpropanoyl-CoA + oxidized [electron-transfer flavoprotein] + H(+) = 2-methylpropenoyl-CoA + reduced [electron-transfer flavoprotein]. The enzyme catalyses (2S)-2-methylbutanoyl-CoA + oxidized [electron-transfer flavoprotein] + H(+) = (2E)-2-methylbut-2-enoyl-CoA + reduced [electron-transfer flavoprotein]. It catalyses the reaction propanoyl-CoA + oxidized [electron-transfer flavoprotein] + H(+) = acryloyl-CoA + reduced [electron-transfer flavoprotein]. It functions in the pathway amino-acid degradation; L-valine degradation. Functionally, isobutyryl-CoA dehydrogenase which catalyzes the conversion of 2-methylpropanoyl-CoA to (2E)-2-methylpropenoyl-CoA in the valine catabolic pathway. To a lesser extent, also able to catalyze the oxidation of (2S)-2-methylbutanoyl-CoA. The polypeptide is Isobutyryl-CoA dehydrogenase, mitochondrial (Mus musculus (Mouse)).